An 860-amino-acid polypeptide reads, in one-letter code: Protein argonaute-2 (860 aa).

Tyr-2 is subject to 3'-nitrotyrosine. The region spanning 230–349 (PVIEFVCEVL…LPLEVCNIVA (120 aa)) is the PAZ domain. An interaction with guide RNA region spans residues 312–317 (YFKDRH). Ser-388 bears the Phosphoserine mark. In terms of domain architecture, Piwi spans 518 to 819 (LVVVILPGKT…VAFRARYHLV (302 aa)). Positions 525–567 (GKTPVYAEVKRVGDTVLGMATQCVQMKNVQRTTPQTLSNLCLK) are interaction with guide RNA. The interaction with GW182 family members stretch occupies residues 588 to 591 (FQQP). Position 598 (Asp-598) interacts with a divalent metal cation. The interval 651 to 661 (LIQFYKSTRFK) is interaction with GW182 family members. Asp-670 contacts a divalent metal cation. Pro-701 bears the 4-hydroxyproline mark. Interaction with guide RNA regions lie at residues 710–711 (KR), 754–762 (HAGIQGTSR), and 791–813 (YVRC…VAFR). His-808 serves as a coordination point for a divalent metal cation. A phosphoserine mark is found at Ser-825, Ser-829, Ser-832, and Ser-835.

The protein belongs to the argonaute family. Ago subfamily. As to quaternary structure, interacts with DICER1 through its Piwi domain and with TARBP2 during assembly of the RNA-induced silencing complex (RISC). Together, DICER1, AGO2 and TARBP2 constitute the trimeric RISC loading complex (RLC), or micro-RNA (miRNA) loading complex (miRLC). Within the RLC/miRLC, DICER1 and TARBP2 are required to process precursor miRNAs (pre-miRNAs) to mature miRNAs and then load them onto AGO2. AGO2 bound to the mature miRNA constitutes the minimal RISC and may subsequently dissociate from DICER1 and TARBP2. Note however that the term RISC has also been used to describe the trimeric RLC/miRLC. The formation of RISC complexes containing siRNAs rather than miRNAs appears to occur independently of DICER1. Interacts with AGO1. Also interacts with DDB1, DDX5, DDX6, DDX20, DHX30, DHX36, DDX47, DHX9, ELAVL, FXR1, GEMIN4, HNRNPF, IGF2BP1, ILF3, IMP8, MATR3, PABPC1, PRMT5, P4HA1, P4HB, RBM4, SART3, TNRC6A, TNRC6B, UPF1 and YBX1. Interacts with the P-body components DCP1A and XRN1. Associates with polysomes and messenger ribonucleoproteins (mNRPs). Interacts with RBM4; the interaction is modulated under stress-induced conditions, occurs under both cell proliferation and differentiation conditions and in an RNA- and phosphorylation-independent manner. Interacts with LIMD1, WTIP and AJUBA. Interacts with TRIM71. Interacts with APOBEC3G in an RNA-dependent manner. Interacts with APOBEC3A, APOBEC3C, APOBEC3F and APOBEC3H. Interacts with DICER1, TARBP2, EIF6, MOV10 and RPL7A (60S ribosome subunit); they form a large RNA-induced silencing complex (RISC). Interacts with FMR1. Interacts with ZFP36. Interacts with RC3H1; the interaction is RNA independent. Interacts with ARB2A. Found in a complex composed of AGO2, CHD7 and ARB2A. Interacts with SND1 and SYT11. Interacts with CLNK. Interacts with GARRE1. Interacts with GRB2; this interaction is important for the formation of a ternary complex containing GRB2, AGO2 and DICER1. Mg(2+) serves as cofactor. Requires Mn(2+) as cofactor. Post-translationally, hydroxylated. 4-hydroxylation appears to enhance protein stability but is not required for miRNA-binding or endonuclease activity. Ubiquitinated on surface-exposed lysines by a SCF-like E3 ubiquitin-protein ligase complex containing ZSWIM8 during target-directed microRNA degradation (TDMD), a process that mediates degradation of microRNAs (miRNAs). Ubiquitination by the SCF-like E3 ubiquitin-protein ligase complex containing ZSWIM8 leads to its subsequent degradation, thereby exposing miRNAs for degradation. ZSWIM8 recognizes and binds AGO2 when it is engaged with a TDMD target. In terms of processing, phosphorylation at Ser-388 by AKT3; leads to up-regulate translational repression of microRNA target and down-regulate endonucleolytic cleavage. Post-translationally, a phosphorylation cycle of C-terminal serine cluster (Ser-825-Ser-835) regulates the release of target mRNAs. Target-binding leads to phosphorylation of these residues by CSNK1A1, which reduces the affinity of AGO2 for mRNA and enables target release. The ANKRD52-PPP6C phosphatase complex dephosphorylates the residues, which primes AGO2 for binding a new target. Ubiquitous expression in 9.5 day embryos with highest levels in forebrain, heart, limb buds, and branchial arches.

The protein resides in the cytoplasm. It is found in the P-body. It localises to the nucleus. The enzyme catalyses Endonucleolytic cleavage to 5'-phosphomonoester.. Required for RNA-mediated gene silencing (RNAi) by the RNA-induced silencing complex (RISC). The 'minimal RISC' appears to include AGO2 bound to a short guide RNA such as a microRNA (miRNA) or short interfering RNA (siRNA). These guide RNAs direct RISC to complementary mRNAs that are targets for RISC-mediated gene silencing. The precise mechanism of gene silencing depends on the degree of complementarity between the miRNA or siRNA and its target. Binding of RISC to a perfectly complementary mRNA generally results in silencing due to endonucleolytic cleavage of the mRNA specifically by AGO2. Binding of RISC to a partially complementary mRNA results in silencing through inhibition of translation, and this is independent of endonuclease activity. May inhibit translation initiation by binding to the 7-methylguanosine cap, thereby preventing the recruitment of the translation initiation factor eIF4-E. May also inhibit translation initiation via interaction with EIF6, which itself binds to the 60S ribosomal subunit and prevents its association with the 40S ribosomal subunit. The inhibition of translational initiation leads to the accumulation of the affected mRNA in cytoplasmic processing bodies (P-bodies), where mRNA degradation may subsequently occur. In some cases RISC-mediated translational repression is also observed for miRNAs that perfectly match the 3' untranslated region (3'-UTR). Can also up-regulate the translation of specific mRNAs under certain growth conditions. Binds to the AU element of the 3'-UTR of the TNF (TNF-alpha) mRNA and up-regulates translation under conditions of serum starvation. Also required for transcriptional gene silencing (TGS), in which short RNAs known as antigene RNAs or agRNAs direct the transcriptional repression of complementary promoter regions. Regulates lymphoid and erythroid development and function, and this is independent of endonuclease activity. The sequence is that of Protein argonaute-2 (Ago2) from Mus musculus (Mouse).